The primary structure comprises 1555 residues: Pre-mRNA cleavage complex 2 protein Pcf11 (1555 aa).

N-acetylserine is present on Ser-2. A CID domain is found at 14 to 142; that stretch reads AREDACRDYQ…ALDVRVNSLD (129 aa). Ser-120 carries the phosphoserine; by WNK1 modification. Residue Thr-121 is modified to Phosphothreonine; by WNK1. The disordered stretch occupies residues 167–186; it reads NKSPEEPSTPGTVVSSPSIS. Phosphoserine occurs at positions 169 and 182. Positions 174–186 are enriched in low complexity; it reads STPGTVVSSPSIS. The stretch at 202–239 forms a coiled coil; the sequence is QLIRQQLLAKQKQLLELQQKKLELELEQAKAQLAVSLS. The segment at 266-648 is disordered; that stretch reads VKAPHQVPVQ…QQQHRLSVDA (383 aa). Residue Lys-291 forms a Glycyl lysine isopeptide (Lys-Gly) (interchain with G-Cter in SUMO2) linkage. The span at 307–317 shows a compositional bias: basic and acidic residues; that stretch reads HGKDQSHRKEF. The span at 320–333 shows a compositional bias: polar residues; sequence NTLNQSDTKTSKTI. Lys-328 participates in a covalent cross-link: Glycyl lysine isopeptide (Lys-Gly) (interchain with G-Cter in SUMO2). Basic and acidic residues-rich tracts occupy residues 342-364, 380-421, and 427-442; these read KQEK…DSKS, HTKD…DVKE, and EKKD…EHRL. Lys-456 participates in a covalent cross-link: Glycyl lysine isopeptide (Lys-Gly) (interchain with G-Cter in SUMO2). A Phosphothreonine modification is found at Thr-459. Basic residues predominate over residues 475–486; that stretch reads STRKRSRSRSPK. Phosphoserine occurs at positions 489, 494, 509, and 511. Over residues 494–508 the composition is skewed to basic residues; it reads SPKRRDRRSPKRRQR. Positions 529-567 are enriched in basic and acidic residues; it reads SHMEEFTPPSREDRNAKRSTKQDIRDPRRMKKTEEERPQ. Residues 568-578 show a composition bias toward polar residues; it reads ETTNQHSTKSG. The segment covering 599–615 has biased composition (basic and acidic residues); the sequence is SGWEENKSLQQVDEHSK. At Ser-645 the chain carries Phosphoserine. Lys-654 participates in a covalent cross-link: Glycyl lysine isopeptide (Lys-Gly) (interchain with G-Cter in SUMO2). A Phosphoserine modification is found at Ser-705. Disordered stretches follow at residues 707-732 and 749-781; these read FNDR…PASR and RPLF…PRID. Basic and acidic residues predominate over residues 716–725; the sequence is PRYEDSDKPF. Residue Lys-723 forms a Glycyl lysine isopeptide (Lys-Gly) (interchain with G-Cter in SUMO2) linkage. Ser-728 and Ser-777 each carry phosphoserine. Residue Thr-785 is modified to Phosphothreonine. A Phosphoserine modification is found at Ser-794. An asymmetric dimethylarginine mark is found at Arg-805, Arg-820, and Arg-833. Ser-851 carries the phosphoserine modification. Arg-929, Arg-942, Arg-955, Arg-981, Arg-994, and Arg-1007 each carry asymmetric dimethylarginine. The disordered stretch occupies residues 1056–1081; sequence HGQPGPRFERTPGQPGPQRFDGPPGQ. Residues Arg-1093 and Arg-1104 each carry the asymmetric dimethylarginine modification. Disordered stretches follow at residues 1127 to 1147 and 1159 to 1187; these read VSFN…NAPS and FDSP…RASG. A Phosphoserine modification is found at Ser-1161. Positions 1162-1175 are enriched in low complexity; that stretch reads PQGPNFNGPHGPGN. Lys-1278 participates in a covalent cross-link: Glycyl lysine isopeptide (Lys-Gly) (interchain with G-Cter in SUMO2). Positions 1289–1298 are enriched in polar residues; the sequence is SATTQVSEVT. Residues 1289–1315 form a disordered region; that stretch reads SATTQVSEVTAQPPPEEEEDQNEDQDV. Residues 1303 to 1315 show a composition bias toward acidic residues; sequence PEEEEDQNEDQDV. Glycyl lysine isopeptide (Lys-Gly) (interchain with G-Cter in SUMO2) cross-links involve residues Lys-1419, Lys-1511, and Lys-1524. A disordered region spans residues 1516 to 1555; it reads EPCDSPKVKEERIDTPPACTEESIATPSEIKTENDTVESV. A compositionally biased stretch (basic and acidic residues) spans 1519–1529; the sequence is DSPKVKEERID. Thr-1530 bears the Phosphothreonine mark. Lys-1546 is covalently cross-linked (Glycyl lysine isopeptide (Lys-Gly) (interchain with G-Cter in SUMO2)).

In terms of assembly, associates with the phosphorylated CTD domain of POLR2A /RNA polymerase II. In terms of processing, phosphorylation at Ser-120 and/or Thr-121 by WNK1 weakens its association with POLR2A/RNA polymerase II, promoting transcript release from the chromatin template and mRNA export to the cytoplasm.

Its subcellular location is the nucleus. Its function is as follows. Component of pre-mRNA cleavage complex II, which promotes transcription termination by RNA polymerase II. This is Pre-mRNA cleavage complex 2 protein Pcf11 from Homo sapiens (Human).